Consider the following 299-residue polypeptide: Tyrosine recombinase XerC (299 aa).

The Core-binding (CB) domain maps to 1–85 (MKRQLEAYCA…AVRGLYRYLN (85 aa)). The Tyr recombinase domain occupies 106 to 285 (RLPKVLDTDR…DFQHLAAVYD (180 aa)). Residues Arg146, Lys170, His237, Arg240, and His263 contribute to the active site. The O-(3'-phospho-DNA)-tyrosine intermediate role is filled by Tyr272.

It belongs to the 'phage' integrase family. XerC subfamily. Forms a cyclic heterotetrameric complex composed of two molecules of XerC and two molecules of XerD.

It localises to the cytoplasm. Functionally, site-specific tyrosine recombinase, which acts by catalyzing the cutting and rejoining of the recombining DNA molecules. The XerC-XerD complex is essential to convert dimers of the bacterial chromosome into monomers to permit their segregation at cell division. It also contributes to the segregational stability of plasmids. This Pseudomonas putida (strain ATCC 47054 / DSM 6125 / CFBP 8728 / NCIMB 11950 / KT2440) protein is Tyrosine recombinase XerC.